A 304-amino-acid polypeptide reads, in one-letter code: Acetyl-coenzyme A carboxylase carboxyl transferase subunit beta (304 aa).

Positions valine 23 to valine 292 constitute a CoA carboxyltransferase N-terminal domain. Residues cysteine 27, cysteine 30, cysteine 46, and cysteine 49 each coordinate Zn(2+). Residues cysteine 27–cysteine 49 form a C4-type zinc finger. The interval proline 283–alanine 304 is disordered.

It belongs to the AccD/PCCB family. Acetyl-CoA carboxylase is a heterohexamer composed of biotin carboxyl carrier protein (AccB), biotin carboxylase (AccC) and two subunits each of ACCase subunit alpha (AccA) and ACCase subunit beta (AccD). Zn(2+) is required as a cofactor.

The protein resides in the cytoplasm. The catalysed reaction is N(6)-carboxybiotinyl-L-lysyl-[protein] + acetyl-CoA = N(6)-biotinyl-L-lysyl-[protein] + malonyl-CoA. The protein operates within lipid metabolism; malonyl-CoA biosynthesis; malonyl-CoA from acetyl-CoA: step 1/1. Its function is as follows. Component of the acetyl coenzyme A carboxylase (ACC) complex. Biotin carboxylase (BC) catalyzes the carboxylation of biotin on its carrier protein (BCCP) and then the CO(2) group is transferred by the transcarboxylase to acetyl-CoA to form malonyl-CoA. The protein is Acetyl-coenzyme A carboxylase carboxyl transferase subunit beta of Salmonella agona (strain SL483).